A 674-amino-acid polypeptide reads, in one-letter code: PTS system glucose-specific EIIBCA component (674 aa).

A PTS EIIB type-1 domain is found at 1–89 (MASKLTTTSQ…LKLDGMKHFA (89 aa)). C28 serves as the catalytic Phosphocysteine intermediate; for EIIB activity. The 360-residue stretch at 117–476 (EFLSDTFRPI…DAERDEAKAQ (360 aa)) folds into the PTS EIIC type-1 domain. 10 consecutive transmembrane segments (helical) span residues 126–146 (ILWA…ADTF), 162–182 (YVFL…MVGA), 193–213 (WIGA…LGSA), 225–245 (VLND…GLYW), 260–280 (MVFV…FLLG), 303–323 (FILS…GLHW), 344–364 (PMGA…LIAL), 376–396 (LGGM…YGVL), 409–429 (GCLV…AFVF), and 442–462 (LGYT…VLFF). Positions 542-646 (DPIFAAGKLG…PLITPVVVSN (105 aa)) constitute a PTS EIIA type-1 domain. H594 (tele-phosphohistidine intermediate; for EIIA activity) is an active-site residue.

It localises to the cell membrane. The enzyme catalyses N(pros)-phospho-L-histidyl-[protein] + D-glucose(out) = D-glucose 6-phosphate(in) + L-histidyl-[protein]. Functionally, the phosphoenolpyruvate-dependent sugar phosphotransferase system (sugar PTS), a major carbohydrate active transport system, catalyzes the phosphorylation of incoming sugar substrates concomitantly with their translocation across the cell membrane. This system is involved in glucose transport. The sequence is that of PTS system glucose-specific EIIBCA component (ptsG) from Corynebacterium glutamicum (Brevibacterium saccharolyticum).